Consider the following 444-residue polypeptide: 23S rRNA (uracil(1939)-C(5))-methyltransferase RlmD (444 aa).

Positions 5–67 (RNRFDRTPFQ…RHFDEAKTVE (63 aa)) constitute a TRAM domain. [4Fe-4S] cluster-binding residues include cysteine 80, cysteine 86, cysteine 89, and cysteine 168. Positions 276, 305, 310, 326, 353, and 374 each coordinate S-adenosyl-L-methionine. Cysteine 400 serves as the catalytic Nucleophile.

This sequence belongs to the class I-like SAM-binding methyltransferase superfamily. RNA M5U methyltransferase family. RlmD subfamily.

The enzyme catalyses uridine(1939) in 23S rRNA + S-adenosyl-L-methionine = 5-methyluridine(1939) in 23S rRNA + S-adenosyl-L-homocysteine + H(+). Its function is as follows. Catalyzes the formation of 5-methyl-uridine at position 1939 (m5U1939) in 23S rRNA. This chain is 23S rRNA (uracil(1939)-C(5))-methyltransferase RlmD, found in Xanthomonas campestris pv. campestris (strain 8004).